The primary structure comprises 84 residues: MPLARDLLHPSLDEEKKKHKKKRLVQSPNSYFMDVKCPGCYKITTVFSHAQTVVLCVGCSTVLCQPTGGKARLTEGCSFRRKQH.

A compositionally biased stretch (basic and acidic residues) spans 1 to 16; the sequence is MPLARDLLHPSLDEEK. Positions 1–23 are disordered; it reads MPLARDLLHPSLDEEKKKHKKKR. A C4-type zinc finger spans residues 38–60; that stretch reads PGCYKITTVFSHAQTVVLCVGCS.

This sequence belongs to the eukaryotic ribosomal protein eS27 family. Zn(2+) serves as cofactor.

The polypeptide is Small ribosomal subunit protein eS27-like (RPS27L) (Bos taurus (Bovine)).